We begin with the raw amino-acid sequence, 292 residues long: 33 kDa chaperonin (292 aa).

Cystine bridges form between Cys-230–Cys-232 and Cys-263–Cys-266.

It belongs to the HSP33 family. Under oxidizing conditions two disulfide bonds are formed involving the reactive cysteines. Under reducing conditions zinc is bound to the reactive cysteines and the protein is inactive.

It localises to the cytoplasm. Its function is as follows. Redox regulated molecular chaperone. Protects both thermally unfolding and oxidatively damaged proteins from irreversible aggregation. Plays an important role in the bacterial defense system toward oxidative stress. The chain is 33 kDa chaperonin from Salmonella paratyphi A (strain ATCC 9150 / SARB42).